The chain runs to 152 residues: Deoxyuridine 5'-triphosphate nucleotidohydrolase (152 aa).

Residues 72 to 74 (RSG), N85, 89 to 91 (TID), and K99 each bind substrate.

It belongs to the dUTPase family. The cofactor is Mg(2+).

The catalysed reaction is dUTP + H2O = dUMP + diphosphate + H(+). It functions in the pathway pyrimidine metabolism; dUMP biosynthesis; dUMP from dCTP (dUTP route): step 2/2. This enzyme is involved in nucleotide metabolism: it produces dUMP, the immediate precursor of thymidine nucleotides and it decreases the intracellular concentration of dUTP so that uracil cannot be incorporated into DNA. The chain is Deoxyuridine 5'-triphosphate nucleotidohydrolase from Bradyrhizobium diazoefficiens (strain JCM 10833 / BCRC 13528 / IAM 13628 / NBRC 14792 / USDA 110).